Consider the following 229-residue polypeptide: Uracil-DNA glycosylase (229 aa).

Aspartate 64 serves as the catalytic Proton acceptor.

The protein belongs to the uracil-DNA glycosylase (UDG) superfamily. UNG family.

Its subcellular location is the cytoplasm. It catalyses the reaction Hydrolyzes single-stranded DNA or mismatched double-stranded DNA and polynucleotides, releasing free uracil.. Its function is as follows. Excises uracil residues from the DNA which can arise as a result of misincorporation of dUMP residues by DNA polymerase or due to deamination of cytosine. The polypeptide is Uracil-DNA glycosylase (Klebsiella pneumoniae (strain 342)).